Reading from the N-terminus, the 181-residue chain is HGPRTase-like protein 2 (181 aa).

This sequence belongs to the purine/pyrimidine phosphoribosyltransferase family. Archaeal HPRT subfamily.

In terms of biological role, may catalyze a purine salvage reaction, the substrate is unknown. This Natrialba magadii (strain ATCC 43099 / DSM 3394 / CCM 3739 / CIP 104546 / IAM 13178 / JCM 8861 / NBRC 102185 / NCIMB 2190 / MS3) (Natronobacterium magadii) protein is HGPRTase-like protein 2.